The chain runs to 495 residues: Ribose import ATP-binding protein RbsA 3 (495 aa).

2 consecutive ABC transporter domains span residues 5-240 (VRLR…VGRE) and 250-492 (AEIG…TGVK). 37-44 (GENGAGKS) is a binding site for ATP.

It belongs to the ABC transporter superfamily. Ribose importer (TC 3.A.1.2.1) family. As to quaternary structure, the complex is composed of an ATP-binding protein (RbsA), two transmembrane proteins (RbsC) and a solute-binding protein (RbsB).

Its subcellular location is the cell membrane. The catalysed reaction is D-ribose(out) + ATP + H2O = D-ribose(in) + ADP + phosphate + H(+). Part of the ABC transporter complex RbsABC involved in ribose import. Responsible for energy coupling to the transport system. In Rubrobacter xylanophilus (strain DSM 9941 / JCM 11954 / NBRC 16129 / PRD-1), this protein is Ribose import ATP-binding protein RbsA 3.